The sequence spans 117 residues: Replication initiation control protein YabA (117 aa).

The tract at residues N45–D81 is disordered. 2 stretches are compositionally biased toward basic and acidic residues: residues Q46–E62 and G72–D81. Zn(2+) contacts are provided by H92, C94, C107, and C110.

This sequence belongs to the YabA family. As to quaternary structure, homotetramer. Interacts with both DnaA and DnaN, acting as a bridge between these two proteins. It depends on Zn(2+) as a cofactor.

It is found in the cytoplasm. It localises to the nucleoid. Functionally, involved in control of chromosome replication initiation. Inhibits the cooperative binding of DnaA to the oriC region, thus negatively regulating initiation of chromosome replication. Inhibits the ability of DnaA-ATP to form a helix on DNA; does not disassemble preformed DnaA-DNA helices. Decreases the residence time of DnaA on the chromosome at its binding sites (oriC, replication forks and promoter-binding sites). Tethers DnaA to the replication machinery via the DNA polymerase beta sliding clamp subunit (dnaN). Associates with oriC and other DnaA targets on the chromosome in a DnaA-dependent manner. The sequence is that of Replication initiation control protein YabA from Bacillus pumilus (strain SAFR-032).